The following is a 355-amino-acid chain: UDP-N-acetylglucosamine--N-acetylmuramyl-(pentapeptide) pyrophosphoryl-undecaprenol N-acetylglucosamine transferase (355 aa).

Residues 14–16, N126, R162, S190, I243, 262–267, and Q287 each bind UDP-N-acetyl-alpha-D-glucosamine; these read TGG and ALTVSE.

This sequence belongs to the glycosyltransferase 28 family. MurG subfamily.

It localises to the cell inner membrane. The enzyme catalyses di-trans,octa-cis-undecaprenyl diphospho-N-acetyl-alpha-D-muramoyl-L-alanyl-D-glutamyl-meso-2,6-diaminopimeloyl-D-alanyl-D-alanine + UDP-N-acetyl-alpha-D-glucosamine = di-trans,octa-cis-undecaprenyl diphospho-[N-acetyl-alpha-D-glucosaminyl-(1-&gt;4)]-N-acetyl-alpha-D-muramoyl-L-alanyl-D-glutamyl-meso-2,6-diaminopimeloyl-D-alanyl-D-alanine + UDP + H(+). The protein operates within cell wall biogenesis; peptidoglycan biosynthesis. Functionally, cell wall formation. Catalyzes the transfer of a GlcNAc subunit on undecaprenyl-pyrophosphoryl-MurNAc-pentapeptide (lipid intermediate I) to form undecaprenyl-pyrophosphoryl-MurNAc-(pentapeptide)GlcNAc (lipid intermediate II). This is UDP-N-acetylglucosamine--N-acetylmuramyl-(pentapeptide) pyrophosphoryl-undecaprenol N-acetylglucosamine transferase from Vibrio vulnificus (strain YJ016).